The primary structure comprises 431 residues: Glutamyl-tRNA(Gln) amidotransferase subunit A (431 aa).

Residues Lys-55 and Ser-130 each act as charge relay system in the active site. Ser-154 (acyl-ester intermediate) is an active-site residue.

This sequence belongs to the amidase family. GatA subfamily. Heterotrimer of A, B and C subunits.

It carries out the reaction L-glutamyl-tRNA(Gln) + L-glutamine + ATP + H2O = L-glutaminyl-tRNA(Gln) + L-glutamate + ADP + phosphate + H(+). In terms of biological role, allows the formation of correctly charged Gln-tRNA(Gln) through the transamidation of misacylated Glu-tRNA(Gln) in organisms which lack glutaminyl-tRNA synthetase. The reaction takes place in the presence of glutamine and ATP through an activated gamma-phospho-Glu-tRNA(Gln). In Methanococcus maripaludis (strain C6 / ATCC BAA-1332), this protein is Glutamyl-tRNA(Gln) amidotransferase subunit A.